A 643-amino-acid chain; its full sequence is Protein cueball (643 aa).

The first 21 residues, 1-21 (MMIWVPALIFLSACLLPRSNG), serve as a signal peptide directing secretion. Topologically, residues 22 to 530 (TPLEWDFAVT…VCQTPFVWTS (509 aa)) are extracellular. N-linked (GlcNAc...) asparagine glycosylation is found at Asn77 and Asn103. 3 LDL-receptor class B repeats span residues 116–163 (RNLF…DICR), 164–208 (RKLY…DQLS), and 209–254 (DRLF…TNDA). A glycan (N-linked (GlcNAc...) asparagine) is linked at Asn172. The segment covering 276 to 290 (ATTTVRPEVESSTDG) has biased composition (polar residues). The tract at residues 276-303 (ATTTVRPEVESSTDGTESESKQESEPVE) is disordered. An N-linked (GlcNAc...) asparagine glycan is attached at Asn312. EGF-like domains lie at 363–397 (RMDQ…SRCE), 398–429 (IREC…FTGE), and 432–470 (EVSN…ERCE). Intrachain disulfides connect Cys372/Cys385, Cys387/Cys396, Cys401/Cys410, Cys405/Cys420, Cys436/Cys446, Cys440/Cys458, and Cys460/Cys469. N-linked (GlcNAc...) asparagine glycosylation is found at Asn472 and Asn507. The helical transmembrane segment at 531–551 (SVIIILVVGIVFSLLLITTII) threads the bilayer. At 552 to 643 (HGIRRLYKPK…LIHNMEDDLY (92 aa)) the chain is on the cytoplasmic side.

It belongs to the cueball family.

It localises to the cell membrane. Its function is as follows. Has a role in spermatogenesis and oogenesis. This chain is Protein cueball, found in Drosophila ananassae (Fruit fly).